Here is a 630-residue protein sequence, read N- to C-terminus: Angiotensin-converting enzyme-related protein (630 aa).

Positions 1–22 are cleaved as a signal peptide; sequence MGACNITVLLLVIMLWLPHGLS. The Peptidase M2 domain maps to 28-615; it reads SASVLEARRF…SRLGVPLGWG (588 aa). 2 disulfide bridges follow: Cys-142–Cys-150 and Cys-344–Cys-362. His-375 contacts Zn(2+). Residue Glu-376 is the Proton acceptor of the active site. The Zn(2+) site is built by His-379 and Glu-403. His-505 acts as the Proton donor in catalysis. Cysteines 530 and 548 form a disulfide.

Belongs to the peptidase M2 family. The cofactor is Zn(2+). Glycosylated.

Its subcellular location is the secreted. The protein resides in the extracellular space. The catalysed reaction is Release of a C-terminal dipeptide, oligopeptide-|-Xaa-Yaa, when Xaa is not Pro, and Yaa is neither Asp nor Glu. Thus, conversion of angiotensin I to angiotensin II, with increase in vasoconstrictor activity, but no action on angiotensin II.. With respect to regulation, inhibited by captopril, lisinopril, trandolaprilat, fosinoprilat and enalaprilat. In terms of biological role, may be involved in the specific maturation or degradation of a number of bioactive peptides. May have a role in the specification of heart progenitors. This is Angiotensin-converting enzyme-related protein (Acer) from Drosophila melanogaster (Fruit fly).